Here is a 481-residue protein sequence, read N- to C-terminus: 3-isopropylmalate dehydratase large subunit (481 aa).

[4Fe-4S] cluster is bound by residues Cys-363, Cys-423, and Cys-426. The disordered stretch occupies residues 437 to 463; it reads GQRAASTSNRNFEGRQGRGGRTHLVSP.

It belongs to the aconitase/IPM isomerase family. LeuC type 1 subfamily. Heterodimer of LeuC and LeuD. [4Fe-4S] cluster is required as a cofactor.

It catalyses the reaction (2R,3S)-3-isopropylmalate = (2S)-2-isopropylmalate. It functions in the pathway amino-acid biosynthesis; L-leucine biosynthesis; L-leucine from 3-methyl-2-oxobutanoate: step 2/4. Functionally, catalyzes the isomerization between 2-isopropylmalate and 3-isopropylmalate, via the formation of 2-isopropylmaleate. The chain is 3-isopropylmalate dehydratase large subunit from Salinispora arenicola (strain CNS-205).